We begin with the raw amino-acid sequence, 277 residues long: Undecaprenyl-diphosphatase (277 aa).

A run of 8 helical transmembrane segments spans residues 11-31, 47-67, 96-116, 123-143, 153-173, 197-217, 227-247, and 254-274; these read WWQA…PISS, AGAS…LIYF, VGIL…KAIW, LWVI…AEQT, LGIW…IPGV, SFLL…ISEF, LGTL…IQFL, and LFIV…ALGF.

The protein belongs to the UppP family.

It is found in the cell inner membrane. It carries out the reaction di-trans,octa-cis-undecaprenyl diphosphate + H2O = di-trans,octa-cis-undecaprenyl phosphate + phosphate + H(+). Catalyzes the dephosphorylation of undecaprenyl diphosphate (UPP). Confers resistance to bacitracin. The protein is Undecaprenyl-diphosphatase of Synechococcus sp. (strain JA-2-3B'a(2-13)) (Cyanobacteria bacterium Yellowstone B-Prime).